We begin with the raw amino-acid sequence, 66 residues long: Disintegrin EO5B (66 aa).

Residues 1-65 enclose the Disintegrin domain; it reads NSAHPCCDPV…DCPRNPYKGK (65 aa). Disulfide bonds link cysteine 6–cysteine 29, cysteine 20–cysteine 26, cysteine 25–cysteine 50, and cysteine 38–cysteine 57. Positions 42–44 match the Cell attachment site; atypical (VGD) motif; sequence VGD.

Belongs to the disintegrin family. Dimeric disintegrin subfamily. In terms of assembly, heterodimer with EO4A or EO5A; disulfide-linked. As to expression, expressed by the venom gland.

The protein localises to the secreted. Functionally, poor inhibitor of platelet aggregation. When it dimerizes with EO4A, it inhibits the adhesion of cells expressing the RGD-dependent integrin alpha-5/beta-1 (ITGA5/ITGB1) to immobilized fibronectin. When it dimerizes with EO5A, it inhibits the adhesion of the alpha-4/beta-1 (ITGA4/ITGB1) integrin to VCAM-1. When it dimerizes either with EO4A or EO5A, the inhibition on alpha-IIb/beta-3 (ITGA2B/ITGB3) is low. The chain is Disintegrin EO5B from Echis ocellatus (Ocellated saw-scaled viper).